The chain runs to 150 residues: UPF0756 membrane protein HDEF_0364 (150 aa).

5 consecutive transmembrane segments (helical) span residues 1-21 (MMFF…GLIS), 28-48 (ISVV…FPWV), 51-71 (YALK…IASG), 88-108 (ILGI…VSLM), and 123-143 (ILGV…AGLL).

This sequence belongs to the UPF0756 family.

It is found in the cell membrane. The sequence is that of UPF0756 membrane protein HDEF_0364 from Hamiltonella defensa subsp. Acyrthosiphon pisum (strain 5AT).